A 335-amino-acid polypeptide reads, in one-letter code: Acetyl-coenzyme A carboxylase carboxyl transferase subunit alpha (335 aa).

The CoA carboxyltransferase C-terminal domain occupies 48 to 308; it reads TLEKKVDALR…KGMLIEELKA (261 aa).

It belongs to the AccA family. Acetyl-CoA carboxylase is a heterohexamer composed of biotin carboxyl carrier protein (AccB), biotin carboxylase (AccC) and two subunits each of ACCase subunit alpha (AccA) and ACCase subunit beta (AccD).

The protein localises to the cytoplasm. The catalysed reaction is N(6)-carboxybiotinyl-L-lysyl-[protein] + acetyl-CoA = N(6)-biotinyl-L-lysyl-[protein] + malonyl-CoA. The protein operates within lipid metabolism; malonyl-CoA biosynthesis; malonyl-CoA from acetyl-CoA: step 1/1. In terms of biological role, component of the acetyl coenzyme A carboxylase (ACC) complex. First, biotin carboxylase catalyzes the carboxylation of biotin on its carrier protein (BCCP) and then the CO(2) group is transferred by the carboxyltransferase to acetyl-CoA to form malonyl-CoA. This Chlorobium luteolum (strain DSM 273 / BCRC 81028 / 2530) (Pelodictyon luteolum) protein is Acetyl-coenzyme A carboxylase carboxyl transferase subunit alpha.